The following is an 856-amino-acid chain: PR domain zinc finger protein 1 (856 aa).

An SET domain is found at 115–233 (PRNLLFKYAA…ANQELLVWYC (119 aa)). Disordered regions lie at residues 357-399 (THSP…APGL) and 532-571 (GAAA…VMAA). Composition is skewed to low complexity over residues 373–393 (SSPE…NTVS) and 542–556 (SPPS…AATS). The segment at 558–605 (HVVQPKATSSVMAAPSTDGAMNLIKNKRNMTGYKTLPYPLKKQNGKIK) is interaction with PIAS1. 4 consecutive C2H2-type zinc fingers follow at residues 606-628 (YECN…LRVH), 634-656 (FKCQ…YLVH), 662-684 (HECQ…LRLH), and 690-712 (YQCK…KRLH). A Glycyl lysine isopeptide (Lys-Gly) (interchain with G-Cter in SUMO1); alternate cross-link involves residue lysine 847. Lysine 847 participates in a covalent cross-link: Glycyl lysine isopeptide (Lys-Gly) (interchain with G-Cter in SUMO2); alternate.

The protein belongs to the class V-like SAM-binding methyltransferase superfamily. As to quaternary structure, interacts with PRMT5. Interacts with FBXO10. Interacts with FBXO11. Interacts with multiple nuclear sumoylation E3 ligases, including CBX4, PIAS1, PIAS2, PIAS3, PIAS4, PML and RNF4, but not RANBP2. Interacts with LDB1, SMARCD3 and SMARCC1. Interacts with EEIG1; following TNFSF11/RANKL stimulation in bone marrow-derived macrophages, the interaction promotes the binding of PRDM1/BLIMP1 to the gene promoter of IRF8. Post-translationally, sumoylation at Lys-847 by PIAS1 increases transcriptional repressor activity, and is critical for plasma cell differentiation. Can be sumoylated with SUMO1 and SUMO2 by PML. Degradation of the wild-type protein mostly depends upon sumoylation, rather than ubiquitination. Desumoylated by SENP1 and SENP6. Ubiquitinated by SCF(FBXO11), leading to its degradation by the proteasome. Expressed in bone marrow macrophages (at protein level). Expressed in innate lymphocytes, including tissue-resident conventional natural killer (cNK) cells in liver. Expressed also weakly in tissue-resident natural killer (trNK) and natural killer T (NKT) cells in liver. In terms of tissue distribution, expressed in bone marrow, spleen and lymph node but not in brain, heart, kidney, liver, ovary or muscle. Weak expression detected in the lung. As to expression, expressed only in the yolk sac. Expressed in embryo, yolk sac, placenta, splenocytes, and activated T-cells.

It localises to the nucleus. The protein localises to the cytoplasm. Functionally, transcription factor that mediates a transcriptional program in various innate and adaptive immune tissue-resident lymphocyte T cell types such as tissue-resident memory T (Trm), natural killer (trNK) and natural killer T (NKT) cells and negatively regulates gene expression of proteins that promote the egress of tissue-resident T-cell populations from non-lymphoid organs. Plays a role in the development, retention and long-term establishment of adaptive and innate tissue-resident lymphocyte T cell types in non-lymphoid organs, such as the skin and gut, but also in other nonbarrier tissues like liver and kidney, and therefore may provide immediate immunological protection against reactivating infections or viral reinfection. Binds specifically to the PRDI element in the promoter of the beta-interferon gene. Drives the maturation of B-lymphocytes into Ig secreting cells. Associates with the transcriptional repressor ZNF683 to chromatin at gene promoter regions. Binds to the promoter and acts as a transcriptional repressor of IRF8, thereby promotes transcription of osteoclast differentiation factors such as NFATC1 and EEIG1. The sequence is that of PR domain zinc finger protein 1 (Prdm1) from Mus musculus (Mouse).